We begin with the raw amino-acid sequence, 117 residues long: Probable glycerol dehydratase-reactivating factor small subunit (117 aa).

E31 contributes to the Mg(2+) binding site.

The protein belongs to the DdrB/PduH family. As to quaternary structure, member of the GDR complex, probably composed of DhaF(2)/DhaG(2). Requires Mg(2+) as cofactor.

Small subunit of the glycerol dehydratase-reactivating factor (GDR), which reactivates suicidally inhibited adenosylcobalamin-dependent glycerol dehydratase. This chain is Probable glycerol dehydratase-reactivating factor small subunit, found in Citrobacter freundii.